Reading from the N-terminus, the 393-residue chain is MHNSPAAAAPKSFDLTSTAFLIVAFLTGIAGALQTPTLSIFLTDEVHARPGMVGFFFTGSAVIGIIVSQFLAGRSDKKGDRKKLIVFCCVLGMLACVLFAWNRNYFILLFIGVFLSSFGSTANPQMFALAREHADRTGREAVMFSSILRAQVSLAWVIGPPLAYALAMGFSFTVMYLSAAVAFIVCGVMVWFFLPSMRKDAPLATGTLEAPRRNRRDTLLLFVICTLMWGTNSLYIINMPLFIINELHLPEKLAGVMMGTAAGLEIPTMLIAGYFAKRLGKRLLMCIAVVAGLCFYVGMLLAHAPATLLGLQLLNAIYIGILGGIGMLYFQDLMPGQAGSATTLYTNTIRVGWIIAGSLAGIAAEIWNYHAVFWFALVMIVATMFCLARIKDV.

The next 12 helical transmembrane spans lie at 13–33 (FDLTSTAFLIVAFLTGIAGAL), 52–72 (MVGFFFTGSAVIGIIVSQFLA), 84–101 (LIVFCCVLGMLACVLFAW), 105–124 (YFILLFIGVFLSSFGSTANP), 152–172 (VSLAWVIGPPLAYALAMGFSF), 174–194 (VMYLSAAVAFIVCGVMVWFFL), 219–239 (LLLFVICTLMWGTNSLYIINM), 253–273 (LAGVMMGTAAGLEIPTMLIAG), 283–303 (LLMCIAVVAGLCFYVGMLLAH), 308–328 (LLGLQLLNAIYIGILGGIGML), 344–364 (LYTNTIRVGWIIAGSLAGIAA), and 366–386 (IWNYHAVFWFALVMIVATMFC).

The protein belongs to the major facilitator superfamily. Set transporter family.

The protein resides in the cell inner membrane. Functionally, involved in the efflux of sugars. The physiological role may be the detoxification of non-metabolizable sugar analogs. Can transport lactose and glucose. This is Sugar efflux transporter B (setB) from Salmonella typhimurium (strain LT2 / SGSC1412 / ATCC 700720).